Reading from the N-terminus, the 88-residue chain is Small ribosomal subunit protein uS17 (88 aa).

It belongs to the universal ribosomal protein uS17 family. In terms of assembly, part of the 30S ribosomal subunit.

In terms of biological role, one of the primary rRNA binding proteins, it binds specifically to the 5'-end of 16S ribosomal RNA. The polypeptide is Small ribosomal subunit protein uS17 (Prochlorococcus marinus (strain NATL1A)).